A 340-amino-acid chain; its full sequence is Anthranilate phosphoribosyltransferase (340 aa).

5-phospho-alpha-D-ribose 1-diphosphate is bound by residues glycine 79, glycine 82 to aspartate 83, serine 87, asparagine 89 to threonine 92, lysine 107 to serine 115, and serine 119. Residue glycine 79 participates in anthranilate binding. Mg(2+) is bound at residue serine 91. Asparagine 110 serves as a coordination point for anthranilate. Arginine 165 contacts anthranilate. Mg(2+) is bound by residues aspartate 224 and glutamate 225.

This sequence belongs to the anthranilate phosphoribosyltransferase family. In terms of assembly, homodimer. Mg(2+) serves as cofactor.

It catalyses the reaction N-(5-phospho-beta-D-ribosyl)anthranilate + diphosphate = 5-phospho-alpha-D-ribose 1-diphosphate + anthranilate. The protein operates within amino-acid biosynthesis; L-tryptophan biosynthesis; L-tryptophan from chorismate: step 2/5. Functionally, catalyzes the transfer of the phosphoribosyl group of 5-phosphorylribose-1-pyrophosphate (PRPP) to anthranilate to yield N-(5'-phosphoribosyl)-anthranilate (PRA). This Oceanobacillus iheyensis (strain DSM 14371 / CIP 107618 / JCM 11309 / KCTC 3954 / HTE831) protein is Anthranilate phosphoribosyltransferase.